The primary structure comprises 887 residues: Beta-galactosidase 9 (887 aa).

A signal peptide spans 1-30 (MAESIRTFSLQWRILSLIIALLVYFPILSG). Asn37 carries an N-linked (GlcNAc...) asparagine glycan. Glu194 functions as the Proton donor in the catalytic mechanism. Glu263 (nucleophile) is an active-site residue. 5 N-linked (GlcNAc...) asparagine glycosylation sites follow: Asn463, Asn485, Asn496, Asn527, and Asn785. Positions 791-877 (NSVAPEVHLH…KTLAVMSRCS (87 aa)) constitute an SUEL-type lectin domain. Asn881 is a glycosylation site (N-linked (GlcNAc...) asparagine).

Belongs to the glycosyl hydrolase 35 family. In terms of tissue distribution, ubiquitous, with higher expression levels in siliques.

The protein localises to the secreted. The protein resides in the extracellular space. Its subcellular location is the apoplast. The enzyme catalyses Hydrolysis of terminal non-reducing beta-D-galactose residues in beta-D-galactosides.. The sequence is that of Beta-galactosidase 9 (BGAL9) from Arabidopsis thaliana (Mouse-ear cress).